Consider the following 377-residue polypeptide: Succinyl-diaminopimelate desuccinylase (377 aa).

His68 contributes to the Zn(2+) binding site. Asp70 is an active-site residue. Asp101 contacts Zn(2+). The active-site Proton acceptor is the Glu135. Positions 136, 164, and 350 each coordinate Zn(2+).

It belongs to the peptidase M20A family. DapE subfamily. As to quaternary structure, homodimer. The cofactor is Zn(2+). It depends on Co(2+) as a cofactor.

The catalysed reaction is N-succinyl-(2S,6S)-2,6-diaminopimelate + H2O = (2S,6S)-2,6-diaminopimelate + succinate. Its pathway is amino-acid biosynthesis; L-lysine biosynthesis via DAP pathway; LL-2,6-diaminopimelate from (S)-tetrahydrodipicolinate (succinylase route): step 3/3. Functionally, catalyzes the hydrolysis of N-succinyl-L,L-diaminopimelic acid (SDAP), forming succinate and LL-2,6-diaminopimelate (DAP), an intermediate involved in the bacterial biosynthesis of lysine and meso-diaminopimelic acid, an essential component of bacterial cell walls. This Aliivibrio fischeri (strain MJ11) (Vibrio fischeri) protein is Succinyl-diaminopimelate desuccinylase.